The following is a 473-amino-acid chain: Siroheme synthase 1 (473 aa).

Positions 1 to 204 (MDYFPIFCQL…NDHVQADQHV (204 aa)) are precorrin-2 dehydrogenase /sirohydrochlorin ferrochelatase. NAD(+) is bound by residues 22 to 23 (EI) and 43 to 44 (CE). Phosphoserine is present on S128. The segment at 216-473 (GEVVLVGAGP…KVTECVAHVG (258 aa)) is uroporphyrinogen-III C-methyltransferase. Residue P225 participates in S-adenosyl-L-methionine binding. D248 (proton acceptor) is an active-site residue. K270 functions as the Proton donor in the catalytic mechanism. S-adenosyl-L-methionine-binding positions include 301-303 (GGD), I306, 331-332 (TA), M382, and G411.

This sequence in the N-terminal section; belongs to the precorrin-2 dehydrogenase / sirohydrochlorin ferrochelatase family. In the C-terminal section; belongs to the precorrin methyltransferase family.

The enzyme catalyses uroporphyrinogen III + 2 S-adenosyl-L-methionine = precorrin-2 + 2 S-adenosyl-L-homocysteine + H(+). It catalyses the reaction precorrin-2 + NAD(+) = sirohydrochlorin + NADH + 2 H(+). The catalysed reaction is siroheme + 2 H(+) = sirohydrochlorin + Fe(2+). It participates in cofactor biosynthesis; adenosylcobalamin biosynthesis; precorrin-2 from uroporphyrinogen III: step 1/1. The protein operates within cofactor biosynthesis; adenosylcobalamin biosynthesis; sirohydrochlorin from precorrin-2: step 1/1. Its pathway is porphyrin-containing compound metabolism; siroheme biosynthesis; precorrin-2 from uroporphyrinogen III: step 1/1. It functions in the pathway porphyrin-containing compound metabolism; siroheme biosynthesis; siroheme from sirohydrochlorin: step 1/1. It participates in porphyrin-containing compound metabolism; siroheme biosynthesis; sirohydrochlorin from precorrin-2: step 1/1. In terms of biological role, multifunctional enzyme that catalyzes the SAM-dependent methylations of uroporphyrinogen III at position C-2 and C-7 to form precorrin-2 via precorrin-1. Then it catalyzes the NAD-dependent ring dehydrogenation of precorrin-2 to yield sirohydrochlorin. Finally, it catalyzes the ferrochelation of sirohydrochlorin to yield siroheme. The sequence is that of Siroheme synthase 1 from Yersinia pestis (strain Pestoides F).